We begin with the raw amino-acid sequence, 150 residues long: Catabolic 3-dehydroquinase 2 (150 aa).

The active-site Proton acceptor is the Y23. Substrate contacts are provided by N74, H80, and D87. Catalysis depends on H100, which acts as the Proton donor. Substrate-binding positions include 101–102 (IT) and R111.

It belongs to the type-II 3-dehydroquinase family. As to quaternary structure, homododecamer. Adopts a ring-like structure, composed of an arrangement of two hexameric rings stacked on top of one another.

The enzyme catalyses 3-dehydroquinate = 3-dehydroshikimate + H2O. It functions in the pathway aromatic compound metabolism; 3,4-dihydroxybenzoate biosynthesis; 3,4-dihydroxybenzoate from 3-dehydroquinate: step 1/2. In terms of biological role, is involved in the catabolism of quinate. Allows the utilization of quinate as carbon source via the beta-ketoadipate pathway. The sequence is that of Catabolic 3-dehydroquinase 2 from Aspergillus flavus (strain ATCC 200026 / FGSC A1120 / IAM 13836 / NRRL 3357 / JCM 12722 / SRRC 167).